The chain runs to 585 residues: MAKLLIMSIVSFCFIFLLLLFFRYILKRYFNYMLNYKVWYLTLLAGLIPFIPIKFSLFKFNNVNNQAPTVESKSHDLNHNINTTKPIQEFATDIHKFNWDSIDNISTVIWIVLVIILSFKFLKALLYLKYLKKQSLYLNENEKNKIDTILFNHQYKKNIVIRKAETIQSPITFWYGKYIILIPSSYFKSVIDKRLKYIILHEYAHAKNRDTLHLIIFNIFSIIMSYNPLVHIVKRKIIHDNEVEADRFVLNNINKNEFKTYAESIMDSVLNVPFFNKNILSHSFNGKKSLLKRRLINIKEANLKKQSKLILIFICIFTFLLMVIQSQFLMGQSITDYNYKKPLHNDYQILDKSKIFGSNSGSFVMYSMKKDKYYIYNEKESRKRYSPNSTYKIYLAMFGLDRHIINDENSRMSWNHKHYPFDAWNKEQDLNTAMQNSVNWYFERISDQIPKNYTATQLKQLNYGNKNLGSYKSYWMEDSLKISNLEQVIVFKNMMEQNNHFSKKAKNQLSSSLLIKKNEKYELYGKTGTGIVNGKYNNGWFVGYVITNHDKYYFATHLSDGKPSGKNAELISEKILKEMGVLNGQ.

At 1–4 the chain is on the extracellular side; sequence MAKL. Residues 5-22 form a helical membrane-spanning segment; it reads LIMSIVSFCFIFLLLLFF. Residues 23-31 are Cytoplasmic-facing; it reads RYILKRYFN. The helical transmembrane segment at 32-48 threads the bilayer; that stretch reads YMLNYKVWYLTLLAGLI. The Extracellular segment spans residues 49-104; sequence PFIPIKFSLFKFNNVNNQAPTVESKSHDLNHNINTTKPIQEFATDIHKFNWDSIDN. Residues 105-122 traverse the membrane as a helical segment; it reads ISTVIWIVLVIILSFKFL. The Cytoplasmic segment spans residues 123-311; the sequence is KALLYLKYLK…NLKKQSKLIL (189 aa). Residues 312 to 328 traverse the membrane as a helical segment; it reads IFICIFTFLLMVIQSQF. The Extracellular portion of the chain corresponds to 329 to 585; that stretch reads LMGQSITDYN…LKEMGVLNGQ (257 aa). Residues 331–585 are beta-lactam antibiotic sensor domain; sequence GQSITDYNYK…LKEMGVLNGQ (255 aa). Ser389 acts as the Acyl-ester intermediate in catalysis. Lys392 is modified (N6-carboxylysine).

Belongs to the peptidase M56 family. In terms of processing, carboxylation occurs on two lysine residues. Carboxylation at 'Lys-392' activates the active site serine residue for acylation. On acylation, the lysine side chain experiences a spontaneous decarboxylation that entraps the sensor in its activated state.

Its subcellular location is the cell membrane. In terms of biological role, integral membrane protein involved in sensing of the presence of beta-lactam antibiotics and transduction of the information to the cytoplasm. Mechanistically, activation of the signal transducer involves acylation of a serine in the C-terminal sensor domain upon binding of the beta-lactam antibiotic. In turn, a conformational change occurs and the signal is transmitted from the cell surface to the cytoplasm. There, the zinc protease domain is activated and initiates autoproteolysis as well as cleavage of the transcriptional repressor BlaI leading to derepression of antibiotic resistance genes. The chain is Regulatory protein BlaR1 (blaR1) from Staphylococcus aureus.